The following is a 102-amino-acid chain: NADH-quinone oxidoreductase subunit K (102 aa).

The next 3 membrane-spanning stretches (helical) occupy residues 5–25, 30–50, and 62–82; these read LAHY…GIFV, IIVI…NLVA, and IFAM…LAIL.

The protein belongs to the complex I subunit 4L family. NDH-1 is composed of 14 different subunits. Subunits NuoA, H, J, K, L, M, N constitute the membrane sector of the complex.

The protein resides in the cell inner membrane. The enzyme catalyses a quinone + NADH + 5 H(+)(in) = a quinol + NAD(+) + 4 H(+)(out). In terms of biological role, NDH-1 shuttles electrons from NADH, via FMN and iron-sulfur (Fe-S) centers, to quinones in the respiratory chain. The immediate electron acceptor for the enzyme in this species is believed to be ubiquinone. Couples the redox reaction to proton translocation (for every two electrons transferred, four hydrogen ions are translocated across the cytoplasmic membrane), and thus conserves the redox energy in a proton gradient. The polypeptide is NADH-quinone oxidoreductase subunit K (Phenylobacterium zucineum (strain HLK1)).